Here is a 727-residue protein sequence, read N- to C-terminus: NADH-ubiquinone oxidoreductase 75 kDa subunit, mitochondrial (727 aa).

The transit peptide at 1 to 23 directs the protein to the mitochondrion; sequence MLRIPVRKALVVLSKSPKGCVRT. The 2Fe-2S ferredoxin-type domain occupies 30 to 108; the sequence is NLIEVFVDGQ…GWNILTNSKK (79 aa). Positions 64, 75, and 78 each coordinate [2Fe-2S] cluster. At lysine 84 the chain carries N6-acetyllysine. Residue cysteine 92 participates in [2Fe-2S] cluster binding. Residues 108 to 147 form the 4Fe-4S His(Cys)3-ligated-type domain; sequence KSKKAREGVMEFLLANHPLDCPICDQGGECDLQDQSMMFG. 8 residues coordinate [4Fe-4S] cluster: histidine 124, cysteine 128, cysteine 131, cysteine 137, cysteine 176, cysteine 179, cysteine 182, and cysteine 226. Residues 245–301 enclose the 4Fe-4S Mo/W bis-MGD-type domain; the sequence is TRKTESIDVMDAVGSNIVVSTRTGEVMRILPRMHEDINEEWISDKTRFAYDGLKRQR. Residues lysine 467, lysine 499, and lysine 709 each carry the N6-acetyllysine modification.

The protein belongs to the complex I 75 kDa subunit family. Core subunit of respiratory chain NADH dehydrogenase (Complex I) which is composed of 45 different subunits. This is the largest subunit of complex I and it is a component of the iron-sulfur (IP) fragment of the enzyme. Complex I associates with ubiquinol-cytochrome reductase complex (Complex III) to form supercomplexes. Interacts with MDM2 and AKAP1. [2Fe-2S] cluster is required as a cofactor. The cofactor is [4Fe-4S] cluster.

It localises to the mitochondrion inner membrane. The catalysed reaction is a ubiquinone + NADH + 5 H(+)(in) = a ubiquinol + NAD(+) + 4 H(+)(out). Functionally, core subunit of the mitochondrial membrane respiratory chain NADH dehydrogenase (Complex I) which catalyzes electron transfer from NADH through the respiratory chain, using ubiquinone as an electron acceptor. Essential for catalysing the entry and efficient transfer of electrons within complex I. Plays a key role in the assembly and stability of complex I and participates in the association of complex I with ubiquinol-cytochrome reductase complex (Complex III) to form supercomplexes. In Pan troglodytes (Chimpanzee), this protein is NADH-ubiquinone oxidoreductase 75 kDa subunit, mitochondrial (NDUFS1).